The sequence spans 49 residues: Large ribosomal subunit protein bL33 (49 aa).

Belongs to the bacterial ribosomal protein bL33 family.

In Streptococcus suis (strain 98HAH33), this protein is Large ribosomal subunit protein bL33.